The chain runs to 368 residues: Polynucleotide 5'-hydroxyl-kinase NOL9 (368 aa).

ATP is bound at residue Gly36–Ser43.

This sequence belongs to the Clp1 family. NOL9/GRC3 subfamily.

It is found in the nucleus. Its subcellular location is the nucleolus. Polynucleotide 5'-kinase involved in rRNA processing. This Arabidopsis thaliana (Mouse-ear cress) protein is Polynucleotide 5'-hydroxyl-kinase NOL9.